Consider the following 316-residue polypeptide: tRNA methyltransferase 10 homolog B (316 aa).

Residues 73–98 (EKIVAAKKSKRKQEKERRKANRVENS) are a coiled coil. Positions 77-96 (AAKKSKRKQEKERRKANRVE) are disordered. Positions 113 to 310 (IKERLLEAKH…KGVSSRKGYV (198 aa)) constitute an SAM-dependent MTase TRM10-type domain.

Belongs to the class IV-like SAM-binding methyltransferase superfamily. TRM10 family.

It carries out the reaction guanosine(9) in tRNA + S-adenosyl-L-methionine = N(1)-methylguanosine(9) in tRNA + S-adenosyl-L-homocysteine + H(+). S-adenosyl-L-methionine-dependent guanine N(1)-methyltransferase that catalyzes the formation of N(1)-methylguanine at position 9 (m1G9) in tRNAs. Probably not able to catalyze formation of N(1)-methyladenine at position 9 (m1A9) in tRNAs. This is tRNA methyltransferase 10 homolog B (TRMT10B) from Bos taurus (Bovine).